We begin with the raw amino-acid sequence, 650 residues long: FAS-associated factor 1 (650 aa).

The region spanning 1–57 is the UBA domain; it reads MASNMDREMILADFQACTGIENIDEAITLLEQNNWDLVAAINGVIPQENGILQSEYG. The disordered stretch occupies residues 62-87; that stretch reads PGPAFNPASHPASAPTSSSSSAFRPV. The segment covering 68 to 83 has biased composition (low complexity); that stretch reads PASHPASAPTSSSSSA. At S320 the chain carries Phosphoserine. The region spanning 569–646 is the UBX domain; sequence NAEPVSKLRI…KLFPQETLFL (78 aa). Position 580 is a phosphothreonine (T580). Phosphoserine is present on S582.

In terms of assembly, interacts with CDT1 and ATPase VCP/p97. Interacts (via UBA domain) with FAS (via death domain). Interacts (via UBA domain) with NLRP12 (via DAPIN/PYRIN domain). As to expression, most abundant in testis, slightly less abundant in skeletal muscle and heart, followed by prostate, thymus, ovary, small intestine, and colon. Not detected in the peripheral blood leukocytes.

The protein localises to the nucleus. Functionally, ubiquitin-binding protein. Required for the progression of DNA replication forks by targeting DNA replication licensing factor CDT1 for degradation. Potentiates but cannot initiate FAS-induced apoptosis. This chain is FAS-associated factor 1 (FAF1), found in Homo sapiens (Human).